The following is a 587-amino-acid chain: Phosphomethylpyrimidine synthase (587 aa).

Substrate is bound by residues N218, M247, Y276, H312, 332 to 334 (SRG), 373 to 376 (DGLR), and E412. H416 lines the Zn(2+) pocket. Y439 lines the substrate pocket. H480 is a binding site for Zn(2+). C560, C563, and C568 together coordinate [4Fe-4S] cluster.

It belongs to the ThiC family. It depends on [4Fe-4S] cluster as a cofactor.

The enzyme catalyses 5-amino-1-(5-phospho-beta-D-ribosyl)imidazole + S-adenosyl-L-methionine = 4-amino-2-methyl-5-(phosphooxymethyl)pyrimidine + CO + 5'-deoxyadenosine + formate + L-methionine + 3 H(+). Its pathway is cofactor biosynthesis; thiamine diphosphate biosynthesis. Catalyzes the synthesis of the hydroxymethylpyrimidine phosphate (HMP-P) moiety of thiamine from aminoimidazole ribotide (AIR) in a radical S-adenosyl-L-methionine (SAM)-dependent reaction. In Porphyromonas gingivalis (strain ATCC BAA-308 / W83), this protein is Phosphomethylpyrimidine synthase.